The primary structure comprises 368 residues: Alcohol dehydrogenase 6 (368 aa).

Ser-23 is modified (phosphoserine). Cys-47, His-69, Cys-99, Cys-102, Cys-105, Cys-113, and Cys-175 together coordinate Zn(2+). NAD(+)-binding positions include 200–205 (GLGGVG), Asp-224, Lys-229, and 293–295 (VGV).

It belongs to the zinc-containing alcohol dehydrogenase family. Class-V subfamily. As to quaternary structure, dimer. It depends on Zn(2+) as a cofactor. In terms of tissue distribution, stomach and liver.

Its subcellular location is the cytoplasm. It carries out the reaction a primary alcohol + NAD(+) = an aldehyde + NADH + H(+). The enzyme catalyses a secondary alcohol + NAD(+) = a ketone + NADH + H(+). Inhibited partially by pyrazole (10 mM) in the reaction mixture containing 100 mM ethanol at pH 10.0. In terms of biological role, alcohol dehydrogenase. Catalyzes the NAD-dependent oxidation of primary alcohols to the corresponding aldehydes. Oxidizes secondary alcohols to the corresponding ketones. In Homo sapiens (Human), this protein is Alcohol dehydrogenase 6 (ADH6).